A 342-amino-acid polypeptide reads, in one-letter code: N-acetyl-gamma-glutamyl-phosphate reductase (342 aa).

Cys-149 is an active-site residue.

This sequence belongs to the NAGSA dehydrogenase family. Type 1 subfamily.

Its subcellular location is the cytoplasm. The enzyme catalyses N-acetyl-L-glutamate 5-semialdehyde + phosphate + NADP(+) = N-acetyl-L-glutamyl 5-phosphate + NADPH + H(+). Its pathway is amino-acid biosynthesis; L-arginine biosynthesis; N(2)-acetyl-L-ornithine from L-glutamate: step 3/4. In terms of biological role, catalyzes the NADPH-dependent reduction of N-acetyl-5-glutamyl phosphate to yield N-acetyl-L-glutamate 5-semialdehyde. This Laribacter hongkongensis (strain HLHK9) protein is N-acetyl-gamma-glutamyl-phosphate reductase.